Here is a 777-residue protein sequence, read N- to C-terminus: Penicillin-binding protein 1B (777 aa).

Over 1–30 (MTRKSSNRSRGRKARSGKSASSSKLQIWLG) the chain is Cytoplasmic. Residues 31–52 (RIWSIGWKLALTLAAVLVFIGI) form a helical; Signal-anchor for type II membrane protein membrane-spanning segment. Topologically, residues 53-777 (YLDSMIKQRF…TEWIKKLFEW (725 aa)) are periplasmic. Residues 162-334 (LRLEPKLMGM…SYYNPMRYAE (173 aa)) are transglycosylase. Glutamate 200 serves as the catalytic Proton donor; for transglycosylase activity. The segment at 415 to 709 (SKLEQAIHDQ…ASGALRVYAQ (295 aa)) is transpeptidase. Serine 476 acts as the Acyl-ester intermediate; for transpeptidase activity in catalysis.

It in the N-terminal section; belongs to the glycosyltransferase 51 family. This sequence in the C-terminal section; belongs to the transpeptidase family.

The protein resides in the cell inner membrane. It carries out the reaction [GlcNAc-(1-&gt;4)-Mur2Ac(oyl-L-Ala-gamma-D-Glu-L-Lys-D-Ala-D-Ala)](n)-di-trans,octa-cis-undecaprenyl diphosphate + beta-D-GlcNAc-(1-&gt;4)-Mur2Ac(oyl-L-Ala-gamma-D-Glu-L-Lys-D-Ala-D-Ala)-di-trans,octa-cis-undecaprenyl diphosphate = [GlcNAc-(1-&gt;4)-Mur2Ac(oyl-L-Ala-gamma-D-Glu-L-Lys-D-Ala-D-Ala)](n+1)-di-trans,octa-cis-undecaprenyl diphosphate + di-trans,octa-cis-undecaprenyl diphosphate + H(+). The catalysed reaction is Preferential cleavage: (Ac)2-L-Lys-D-Ala-|-D-Ala. Also transpeptidation of peptidyl-alanyl moieties that are N-acyl substituents of D-alanine.. It functions in the pathway cell wall biogenesis; peptidoglycan biosynthesis. Cell wall formation. Synthesis of cross-linked peptidoglycan from the lipid intermediates. The enzyme has a penicillin-insensitive transglycosylase N-terminal domain (formation of linear glycan strands) and a penicillin-sensitive transpeptidase C-terminal domain (cross-linking of the peptide subunits). The polypeptide is Penicillin-binding protein 1B (mrcB) (Vibrio cholerae serotype O1 (strain ATCC 39315 / El Tor Inaba N16961)).